The primary structure comprises 158 residues: Probable host range protein 2-1 (158 aa).

Belongs to the poxviridae C7 protein family.

Functionally, plays a role for multiplication of the virus in different cell types. This is Probable host range protein 2-1 from Oryctolagus cuniculus (Rabbit).